The sequence spans 304 residues: Ornithine carbamoyltransferase (304 aa).

Carbamoyl phosphate-binding positions include 47–50, R98, and 125–128; these read STRT and HPCQ. Residues N156, D221, and 225–226 contribute to the L-ornithine site; that span reads SM. Residues 262–263 and R290 each bind carbamoyl phosphate; that span reads CL.

The protein belongs to the aspartate/ornithine carbamoyltransferase superfamily. OTCase family.

It is found in the cytoplasm. The catalysed reaction is carbamoyl phosphate + L-ornithine = L-citrulline + phosphate + H(+). The protein operates within amino-acid biosynthesis; L-arginine biosynthesis; L-arginine from L-ornithine and carbamoyl phosphate: step 1/3. Reversibly catalyzes the transfer of the carbamoyl group from carbamoyl phosphate (CP) to the N(epsilon) atom of ornithine (ORN) to produce L-citrulline. The sequence is that of Ornithine carbamoyltransferase from Methanococcus maripaludis (strain C5 / ATCC BAA-1333).